The primary structure comprises 1125 residues: Telomerase reverse transcriptase (1125 aa).

Residues 1–239 are RNA-interacting domain 1; sequence MPRAPRCPAV…TKRLLSLTST (239 aa). The segment at 58–205 is GQ motif; sequence VPWGSQPPPA…RPVGGNFTNL (148 aa). The segment at 137-141 is required for regulating specificity for telomeric DNA and for processivity for primer elongation; it reads WMLLL. Residues 206-216 show a composition bias toward polar residues; sequence GSAHQIKNSGH. Residues 206-304 form a disordered region; that stretch reads GSAHQIKNSG…ASDPSLSGSV (99 aa). The interval 240-328 is linker; the sequence is NVPSAKKARF…PPQDAEKLRP (89 aa). Positions 247–259 are enriched in basic and acidic residues; that stretch reads ARFEPALRVDKGP. A compositionally biased stretch (low complexity) spans 273–287; sequence APSPAASPKVPPAAK. The tract at residues 306-528 is required for oligomerization; it reads CKHKPSSSSL…VPAAEHRLRE (223 aa). Residues 329–540 form an RNA-interacting domain 2 region; sequence FTETRHFLYS…LAMFLFWLMD (212 aa). The TFLY; involved in RNA binding signature appears at 332 to 337; sequence TRHFLY. The QFP motif stretch occupies residues 381-511; sequence FCRTRRLPRR…VKVEDCHWLR (131 aa). Positions 402–422 are CP motif; it reads LMNHAKCQYVRFLRSHCRFRT. Serine 447 carries the phosphoserine; by DYRK2 modification. A Reverse transcriptase domain is found at 595-928; the sequence is EVKHHQDTWL…CLFPWCGLLL (334 aa). A Phosphotyrosine; by SRC-type Tyr-kinases modification is found at tyrosine 697. Residues aspartate 702, aspartate 861, and aspartate 862 each coordinate Mg(2+). The segment at 907–921 is required for oligomerization; that stretch reads LGGAAPHQLPAHCLF. Residues 923 to 927 are primer grip sequence; the sequence is WCGLL. Residues 929–1125 are CTE; that stretch reads DTRTLEVFCD…LSTDFQTILD (197 aa).

This sequence belongs to the reverse transcriptase family. Telomerase subfamily. As to quaternary structure, catalytic component of the telomerase holoenzyme complex composed of one molecule of TERT, one molecule of WRAP53/TCAB1, two molecules of H/ACA ribonucleoprotein complex subunits DKC1, NOP10, NHP2 and GAR1, and a telomerase RNA template component (TERC). The telomerase holoenzyme complex is associated with TEP1, SMG6/EST1A and POT1. The molecular chaperone HSP90/P23 complex is required for correct assembly and stabilization of the active telomerase. Interacts directly with HSP90A and PTGES3. Interacts with HSPA1A; the interaction occurs in the absence of TERC and dissociates once the complex has formed. Interacts with RAN; the interaction promotes nuclear export of TERT. Interacts with XPO1. Interacts with PTPN11; the interaction retains TERT in the nucleus. Interacts with NCL (via RRM1 and C-terminal RRM4/Arg/Gly-rich domains); the interaction is important for nucleolar localization of TERT. Interacts with SMARCA4 (via the bromodomain); the interaction regulates Wnt-mediated signaling. Interacts with MCRS1 (isoform MCRS2); the interaction inhibits in vitro telomerase activity. Interacts with PIF1; the interaction has no effect on the elongation activity of TERT. Interacts with PML; the interaction recruits TERT to PML bodies and inhibits telomerase activity. Interacts with GNL3L. Interacts with isoform 1 and isoform 2 of NVL. Interacts with DHX36. Interacts with ATF7. In terms of processing, phosphorylation at Tyr-697 under oxidative stress leads to translocation of TERT to the cytoplasm and reduces its antiapoptotic activity. Dephosphorylated by SHP2/PTPN11 leading to nuclear retention. Phosphorylation at the G2/M phase at Ser-447 by DYRK2 promotes ubiquitination by the EDVP complex and degradation. Ubiquitinated by the EDVP complex, a E3 ligase complex following phosphorylation at Ser-447 by DYRK2. Ubiquitinated leads to proteasomal degradation. Isoform 1 and isoform 2 expressed in thymus, liver, spleen, lung, kidney and testis. High level of inactive isoform 3 in adult hippocampus, low level in heart, cortex and cerebellum.

The protein resides in the nucleus. The protein localises to the nucleolus. It localises to the nucleoplasm. It is found in the chromosome. Its subcellular location is the telomere. The protein resides in the cytoplasm. The protein localises to the PML body. The enzyme catalyses DNA(n) + a 2'-deoxyribonucleoside 5'-triphosphate = DNA(n+1) + diphosphate. Telomerase is a ribonucleoprotein enzyme essential for the replication of chromosome termini in most eukaryotes. Active in progenitor and cancer cells. Inactive, or very low activity, in normal somatic cells. Catalytic component of the teleromerase holoenzyme complex whose main activity is the elongation of telomeres by acting as a reverse transcriptase that adds simple sequence repeats to chromosome ends by copying a template sequence within the RNA component of the enzyme. Catalyzes the RNA-dependent extension of 3'-chromosomal termini with the 6-nucleotide telomeric repeat unit, 5'-TTAGGG-3'. The catalytic cycle involves primer binding, primer extension and release of product once the template boundary has been reached or nascent product translocation followed by further extension. More active on substrates containing 2 or 3 telomeric repeats. Telomerase activity is regulated by a number of factors including telomerase complex-associated proteins, chaperones and polypeptide modifiers. Modulates Wnt signaling. Plays important roles in aging and antiapoptosis. The chain is Telomerase reverse transcriptase from Rattus norvegicus (Rat).